The following is a 518-amino-acid chain: Putative transposase for insertion sequence IS408 (518 aa).

Positions 11–94 constitute an HTH IS408-type domain; the sequence is LKEVLRLKWA…PDYTALHREL (84 aa). The segment at residues 23 to 44 is a DNA-binding region (H-T-H motif); sequence LTHRQISRAIGISVGAVSKFAA. The 196-residue stretch at 140-335 folds into the Integrase catalytic domain; the sequence is QQHRAGEKLF…LPVRRYEIAT (196 aa). The tract at residues 496 to 518 is disordered; that stretch reads LPTTPAEWRSPEHENVRGPDYYH. Over residues 504-518 the composition is skewed to basic and acidic residues; that stretch reads RSPEHENVRGPDYYH.

This sequence belongs to the transposase IS21/IS408/IS1162 family.

Its function is as follows. Required for the transposition of the insertion element. This chain is Putative transposase for insertion sequence IS408, found in Burkholderia multivorans (strain ATCC 17616 / 249).